The sequence spans 295 residues: Aspartate carbamoyltransferase catalytic subunit (295 aa).

2 residues coordinate carbamoyl phosphate: R49 and T50. K77 provides a ligand contact to L-aspartate. 3 residues coordinate carbamoyl phosphate: R99, H127, and Q130. L-aspartate is bound by residues R161 and R212. Carbamoyl phosphate contacts are provided by G251 and P252.

The protein belongs to the aspartate/ornithine carbamoyltransferase superfamily. ATCase family. As to quaternary structure, heterododecamer (2C3:3R2) of six catalytic PyrB chains organized as two trimers (C3), and six regulatory PyrI chains organized as three dimers (R2).

It carries out the reaction carbamoyl phosphate + L-aspartate = N-carbamoyl-L-aspartate + phosphate + H(+). It participates in pyrimidine metabolism; UMP biosynthesis via de novo pathway; (S)-dihydroorotate from bicarbonate: step 2/3. Functionally, catalyzes the condensation of carbamoyl phosphate and aspartate to form carbamoyl aspartate and inorganic phosphate, the committed step in the de novo pyrimidine nucleotide biosynthesis pathway. The sequence is that of Aspartate carbamoyltransferase catalytic subunit from Campylobacter jejuni (strain RM1221).